Reading from the N-terminus, the 365-residue chain is Chorismate synthase (365 aa).

The span at Ile41 to Gly51 shows a compositional bias: basic and acidic residues. Positions Ile41 to Ala62 are disordered. NADP(+) is bound at residue Arg48. Residues Arg125–Ser127, Gly285, Lys300–Ser304, and Arg327 each bind FMN.

This sequence belongs to the chorismate synthase family. It depends on FMNH2 as a cofactor.

It catalyses the reaction 5-O-(1-carboxyvinyl)-3-phosphoshikimate = chorismate + phosphate. It participates in metabolic intermediate biosynthesis; chorismate biosynthesis; chorismate from D-erythrose 4-phosphate and phosphoenolpyruvate: step 7/7. Functionally, catalyzes the anti-1,4-elimination of the C-3 phosphate and the C-6 proR hydrogen from 5-enolpyruvylshikimate-3-phosphate (EPSP) to yield chorismate, which is the branch point compound that serves as the starting substrate for the three terminal pathways of aromatic amino acid biosynthesis. This reaction introduces a second double bond into the aromatic ring system. In Methanosarcina mazei (strain ATCC BAA-159 / DSM 3647 / Goe1 / Go1 / JCM 11833 / OCM 88) (Methanosarcina frisia), this protein is Chorismate synthase.